Consider the following 165-residue polypeptide: MIHYRTIDSPIGPLTLAGHGSVLTNLRMLEQTYEPSRTHWTPDPGAFSGAVDQLNAYFAGELTEFDVELDLRGTDFQQRVWKALLTIPYGETRSYGEIADQIGAPGAARAVGLANGHNPIAIIVPCHRVIGASGKLTGYGGGINRKRALLELEKSRAPADLTLFD.

Catalysis depends on Cys126, which acts as the Nucleophile; methyl group acceptor.

The protein belongs to the MGMT family.

The protein resides in the cytoplasm. It carries out the reaction a 6-O-methyl-2'-deoxyguanosine in DNA + L-cysteinyl-[protein] = S-methyl-L-cysteinyl-[protein] + a 2'-deoxyguanosine in DNA. The catalysed reaction is a 4-O-methyl-thymidine in DNA + L-cysteinyl-[protein] = a thymidine in DNA + S-methyl-L-cysteinyl-[protein]. In terms of biological role, involved in the cellular defense against the biological effects of O6-methylguanine (O6-MeG) and O4-methylthymine (O4-MeT) in DNA. Repairs the methylated nucleobase in DNA by stoichiometrically transferring the methyl group to a cysteine residue in the enzyme. This is a suicide reaction: the enzyme is irreversibly inactivated. The sequence is that of Methylated-DNA--protein-cysteine methyltransferase from Mycobacterium bovis (strain ATCC BAA-935 / AF2122/97).